A 292-amino-acid chain; its full sequence is NAD kinase (292 aa).

The active-site Proton acceptor is Asp-73. NAD(+)-binding positions include 73–74, 147–148, His-158, Arg-175, Asp-177, 188–193, and Gln-247; these read DG, NE, and TAYSLS.

Belongs to the NAD kinase family. The cofactor is a divalent metal cation.

The protein resides in the cytoplasm. It carries out the reaction NAD(+) + ATP = ADP + NADP(+) + H(+). Involved in the regulation of the intracellular balance of NAD and NADP, and is a key enzyme in the biosynthesis of NADP. Catalyzes specifically the phosphorylation on 2'-hydroxyl of the adenosine moiety of NAD to yield NADP. This chain is NAD kinase, found in Escherichia coli O157:H7.